Here is a 248-residue protein sequence, read N- to C-terminus: Probable transcriptional regulatory protein RHE_CH03475 (248 aa).

Belongs to the TACO1 family.

It localises to the cytoplasm. This is Probable transcriptional regulatory protein RHE_CH03475 from Rhizobium etli (strain ATCC 51251 / DSM 11541 / JCM 21823 / NBRC 15573 / CFN 42).